The primary structure comprises 357 residues: MSQNSNPAVVLEKVGDIAIEQRPIPTIKDPHYVKLAIKATGICGSDIHYYRSGGIGKYILKAPMVLGHESSGQVVEVGDAVTRVKVGDRVAIEPGVPSRYSDETKEGSYNLCPHMAFAATPPIDGTLVKYYLSPEDFLVKLPEGVSYEEGACVEPLSVGVHSNKLAGVRFGTKVVVFGAGPVGLLTGAVARAFGATDVIFVDVFDNKLQRAKDFGATNTFNSSQFSTDKAQDLADGVQKLLGGNHADVVFECSGADVCIDAAVKTTKVGGTMVQVGMGKNYTNFPIAEVSGKEMKLIGCFRYSFGDYRDAVNLVATGKVNVKPLITHKFKFEDAAKAYDYNIAHGGEVVKTIIFGPE.

Cys-43 contributes to the Zn(2+) binding site. Tyr-49 serves as a coordination point for substrate. 2 residues coordinate Zn(2+): His-68 and Glu-69. Glu-154 serves as a coordination point for substrate. NAD(+) is bound by residues Asp-202, Lys-207, 275-277 (VGM), and 299-301 (CFR). The substrate site is built by Arg-301 and Tyr-302.

Belongs to the zinc-containing alcohol dehydrogenase family. As to quaternary structure, homotetramer. Zn(2+) is required as a cofactor.

It catalyses the reaction keto-D-fructose + NADH + H(+) = D-sorbitol + NAD(+). The enzyme catalyses xylitol + NAD(+) = D-xylulose + NADH + H(+). Polyol dehydrogenase that catalyzes the reversible NAD(+)-dependent oxidation of various sugar alcohols. Is active with D-sorbitol (D-glucitol) and xylitol as substrates, leading to the C2-oxidized product D-fructose and D-xylulose, respectively. In Saccharomyces cerevisiae (strain ATCC 204508 / S288c) (Baker's yeast), this protein is Sorbitol dehydrogenase 2 (SOR2).